The chain runs to 419 residues: Acyl-coenzyme A thioesterase 1 (419 aa).

Active-site charge relay system residues include S232, D324, and H358. At S416 the chain carries Phosphoserine.

Belongs to the C/M/P thioester hydrolase family. As to quaternary structure, monomer. As to expression, expressed in heart, kidney, brown adipose tissue, white adipose tissue, adrenal gland and muscle.

It localises to the cytoplasm. Its subcellular location is the cytosol. It carries out the reaction hexadecanoyl-CoA + H2O = hexadecanoate + CoA + H(+). The enzyme catalyses decanoyl-CoA + H2O = decanoate + CoA + H(+). The catalysed reaction is dodecanoyl-CoA + H2O = dodecanoate + CoA + H(+). It catalyses the reaction tetradecanoyl-CoA + H2O = tetradecanoate + CoA + H(+). It carries out the reaction octadecanoyl-CoA + H2O = octadecanoate + CoA + H(+). The enzyme catalyses eicosanoyl-CoA + H2O = eicosanoate + CoA + H(+). The catalysed reaction is (9Z)-octadecenoyl-CoA + H2O = (9Z)-octadecenoate + CoA + H(+). It catalyses the reaction (9Z)-hexadecenoyl-CoA + H2O = (9Z)-hexadecenoate + CoA + H(+). It carries out the reaction (9E)-octadecenoyl-CoA + H2O = (9E)-octadecenoate + CoA + H(+). It functions in the pathway lipid metabolism; fatty acid metabolism. Functionally, catalyzes the hydrolysis of acyl-CoAs into free fatty acids and coenzyme A (CoASH), regulating their respective intracellular levels. More active towards saturated and unsaturated long chain fatty acyl-CoAs (C12-C20). In Mus musculus (Mouse), this protein is Acyl-coenzyme A thioesterase 1 (Acot1).